Here is a 343-residue protein sequence, read N- to C-terminus: Replication initiation protein (343 aa).

The tract at residues 42 to 61 (ERKRTKRRRGEHSTKPKCEN) is disordered.

Its function is as follows. Probably functions as an initiator for the IncI1 ColIb-P9 replicon. The chain is Replication initiation protein (repZ) from Escherichia coli.